The chain runs to 309 residues: MADRKLVVVFGATGAQGGSVARALLEDGTFRIRVVTRNPEQRAAKELKQQGAEVVRGDQDDAASMELALAGAHATFIVTNYWETCSQDREVQQPHQWDQVFKQGKLLADLAKRLGLHYVVYSGLENIRKLTAGKLAAGHFDGKGEVEEYFRDIGVPMTSVRLPCYFENLLSYFLPQKAADGKSFLLDLPMGDVPMDGMSVSDLGPVVLSLLKKPEEYVGQNIGLSTCRHTAEEYAALLSKHTGKAVHHAKTTPEDYEKLGFQGAQDLANMFRFYTLKPDRNIHLTLRLNPKAQTLDQWLEQHKGDFAQL.

NADP(+)-binding positions include Gly-11–Gln-16, Arg-37–Gln-41, Asp-58–Gln-59, Thr-79–Tyr-81, Lys-102, Lys-143, and Tyr-165–Asn-168. The interaction with ASS1 stretch occupies residues Pro-163–Ser-199.

It belongs to the NmrA-type oxidoreductase family. Homodimer. Interacts with ASS1. Interaction is enhanced by low NADPH/NADP(+) ratios, which results in inhibition of ASS1 activity.

The protein resides in the cytoplasm. Its subcellular location is the perinuclear region. It is found in the nucleus. Redox sensor protein. Undergoes restructuring and subcellular redistribution in response to changes in intracellular NADPH/NADP(+) levels. At low NADPH concentrations the protein is found mainly as a monomer, and binds argininosuccinate synthase (ASS1), the enzyme involved in nitric oxide synthesis. Association with ASS1 impairs its activity and reduces the production of nitric oxide, which subsecuently prevents apoptosis. Under normal NADPH concentrations, the protein is found as a dimer and hides the binding site for ASS1. The homodimer binds one molecule of NADPH. Has higher affinity for NADPH than for NADP(+). Binding to NADPH is necessary to form a stable dimer. The polypeptide is NmrA-like family domain-containing protein 1 (Nmral1) (Mus musculus (Mouse)).